The chain runs to 663 residues: (R)-specific secondary-alkylsulfatase (663 aa).

Residues 1-28 (MSRFIRASQRRTLLATLIAATLAQPLLA) form the signal peptide. His179, His181, Asp183, and His184 together coordinate Zn(2+). Gln232 contributes to the sulfate binding site. Residues Glu291 and Asp310 each coordinate Zn(2+). Residues 318–323 (NLLTPR) and Arg328 each bind sulfate. Residue His355 participates in Zn(2+) binding. Tyr417 serves as a coordination point for sulfate.

The protein belongs to the metallo-beta-lactamase superfamily. Type III sulfatase family. Homodimer.

The catalysed reaction is an (R)-secondary-alkyl sulfate + H2O = an (S)-secondary-alcohol + sulfate.. Functionally, alkylsulfatase that catalyzes the enantioselective hydrolysis of secondary-alkylsulfates with strict inversion of configuration, leading to the formation of homochiral (S)-configurated alcohols and nonreacted sulfate esters. The substrate spectrum includes a range of linear, branched or cyclic sec-alkylsulfates. Can use sec-alkylsulfate esters bearing aromatic, olefinic and acetylenic moieties. Acts by cleaving the C-O bond, resulting in inversion at the carbon. In Pseudomonas sp, this protein is (R)-specific secondary-alkylsulfatase.